A 278-amino-acid chain; its full sequence is tRNA (guanine-N(7)-)-methyltransferase (278 aa).

Residues glycine 95, 118–119, 153–154, and cysteine 173 contribute to the S-adenosyl-L-methionine site; these read EI and NA. Aspartate 176 is an active-site residue. 251 to 253 is an S-adenosyl-L-methionine binding site; the sequence is TEE.

This sequence belongs to the class I-like SAM-binding methyltransferase superfamily. TrmB family. Forms a complex with TRM82.

The protein resides in the nucleus. The catalysed reaction is guanosine(46) in tRNA + S-adenosyl-L-methionine = N(7)-methylguanosine(46) in tRNA + S-adenosyl-L-homocysteine. It functions in the pathway tRNA modification; N(7)-methylguanine-tRNA biosynthesis. Functionally, catalyzes the formation of N(7)-methylguanine at position 46 (m7G46) in tRNA. This is tRNA (guanine-N(7)-)-methyltransferase from Kluyveromyces lactis (strain ATCC 8585 / CBS 2359 / DSM 70799 / NBRC 1267 / NRRL Y-1140 / WM37) (Yeast).